The following is a 678-amino-acid chain: Alpha-L-arabinofuranosidase 1 (678 aa).

Positions 1 to 33 (MDMESWKLLRSVCVLSFLLGSCFVYQSLRVVDA) are cleaved as a signal peptide. The CBM-cenC domain maps to 152 to 239 (NIEEGKKYKV…WIDQVSAMPV (88 aa)). 4 N-linked (GlcNAc...) asparagine glycosylation sites follow: Asn-181, Asn-362, Asn-523, and Asn-555.

It belongs to the glycosyl hydrolase 51 family. Expressed in roots, leaves, flowers, stems, siliques and seedlings. Observed in zones of cell proliferation, the vascular system and floral abscission zones. Expressed in the guard cells in stems, in xylem vessels and parenchyma cells surrounding the vessels, in the cambium and in the phloem, but not in the secondary xylem.

The protein resides in the secreted. Its subcellular location is the extracellular space. It is found in the extracellular matrix. The catalysed reaction is Hydrolysis of terminal non-reducing alpha-L-arabinofuranoside residues in alpha-L-arabinosides.. Functionally, may be involved in the coordinated dissolution of the cell wall matrix during abscission and in the secondary cell wall formation in xylem vessels. Prefers arabinoxylan, but may also use pectic arabinans as substrates. The chain is Alpha-L-arabinofuranosidase 1 (ASD1) from Arabidopsis thaliana (Mouse-ear cress).